Consider the following 128-residue polypeptide: Large ribosomal subunit protein bL12 (128 aa).

It belongs to the bacterial ribosomal protein bL12 family. In terms of assembly, homodimer. Part of the ribosomal stalk of the 50S ribosomal subunit. Forms a multimeric L10(L12)X complex, where L10 forms an elongated spine to which 2 to 4 L12 dimers bind in a sequential fashion. Binds GTP-bound translation factors.

In terms of biological role, forms part of the ribosomal stalk which helps the ribosome interact with GTP-bound translation factors. Is thus essential for accurate translation. The chain is Large ribosomal subunit protein bL12 from Synechococcus sp. (strain CC9902).